The following is an 84-amino-acid chain: Delta-stichotoxin-Sgt3a (84 aa).

The N-terminal stretch at 1–19 (MAYLKIVLVALMLVVAVSA) is a signal peptide. Positions 20–33 (MRLSDQEDQDISVA) are excised as a propeptide. Intrachain disulfides connect Cys-38-Cys-78, Cys-40-Cys-68, and Cys-61-Cys-79. Residue Gly-84 is a propeptide.

This sequence belongs to the sea anemone sodium channel inhibitory toxin family. Type II subfamily.

It is found in the secreted. The protein resides in the nematocyst. Binds specifically to voltage-gated sodium channels (Nav), thereby delaying their inactivation during signal transduction. The chain is Delta-stichotoxin-Sgt3a from Stichodactyla gigantea (Giant carpet anemone).